The primary structure comprises 614 residues: Vitamin B12 transporter BtuB (614 aa).

The N-terminal stretch at methionine 1–alanine 20 is a signal peptide. Over glutamine 21 to glycine 157 the chain is Periplasmic. The TonB box signature appears at aspartate 26–asparagine 33. The 115-residue stretch at proline 38–threonine 152 folds into the TBDR plug domain. Residues leucine 83, serine 85, asparagine 92, and valine 110–serine 111 contribute to the cyanocob(III)alamin site. The TBDR beta-barrel domain occupies glutamate 155–phenylalanine 614. A beta stranded transmembrane segment spans residues threonine 158–glycine 165. The Extracellular portion of the chain corresponds to serine 166–serine 168. Residues tyrosine 169–glutamine 178 form a beta stranded membrane-spanning segment. The Periplasmic portion of the chain corresponds to glutamine 179–lysine 183. The beta stranded transmembrane segment at threonine 184–threonine 195 threads the bilayer. At histidine 196–glycine 216 the chain is on the extracellular side. 4 residues coordinate Ca(2+): aspartate 199, glutamine 211, aspartate 213, and aspartate 215. Residues phenylalanine 217–glutamate 227 form a beta stranded membrane-spanning segment. Over histidine 228–threonine 231 the chain is Periplasmic. The chain crosses the membrane as a beta stranded span at residues aspartate 232–asparagine 248. The Ca(2+) site is built by tyrosine 249 and aspartate 250. Residues tyrosine 249–threonine 262 are Extracellular-facing. Position 251 (alanine 251) interacts with cyanocob(III)alamin. Aspartate 261 contributes to the Ca(2+) binding site. A beta stranded membrane pass occupies residues arginine 263–asparagine 277. A topological domain (periplasmic) is located at residue glycine 278. The chain crosses the membrane as a beta stranded span at residues glutamate 279–asparagine 296. The Extracellular segment spans residues tyrosine 297–alanine 308. Residue threonine 309 coordinates cyanocob(III)alamin. A beta stranded membrane pass occupies residues threonine 309–isoleucine 325. The Periplasmic segment spans residues valine 326–glycine 327. The beta stranded transmembrane segment at histidine 328–tryptophan 337 threads the bilayer. Topologically, residues glutamine 338–glycine 352 are extracellular. A beta stranded membrane pass occupies residues tyrosine 353 to glycine 369. Aspartate 370 is a topological domain (periplasmic). Residues phenylalanine 371 to aspartate 381 traverse the membrane as a beta stranded segment. The Extracellular segment spans residues asparagine 382–glutamine 384. A beta stranded membrane pass occupies residues phenylalanine 385–isoleucine 400. The Periplasmic segment spans residues glutamate 401–glycine 402. A beta stranded membrane pass occupies residues tyrosine 403–asparagine 417. At leucine 418 to glutamate 433 the chain is on the extracellular side. The chain crosses the membrane as a beta stranded span at residues lysine 434–glutamate 443. Residues glycine 444–glycine 448 are Periplasmic-facing. Residues valine 449–asparagine 458 traverse the membrane as a beta stranded segment. Topologically, residues aspartate 459 to lysine 472 are extracellular. Residues tyrosine 473 to phenylalanine 490 traverse the membrane as a beta stranded segment. Over aspartate 491–glycine 493 the chain is Periplasmic. The chain crosses the membrane as a beta stranded span at residues proline 494–alanine 509. Residues isoleucine 510–leucine 516 are Extracellular-facing. Arginine 517 is a cyanocob(III)alamin binding site. Residues arginine 517–tryptophan 529 form a beta stranded membrane-spanning segment. The Periplasmic portion of the chain corresponds to glutamine 530 to phenylalanine 534. The chain crosses the membrane as a beta stranded span at residues aspartate 535–aspartate 550. Residue tyrosine 551 coordinates cyanocob(III)alamin. The Extracellular segment spans residues tyrosine 551–glutamine 557. Residues threonine 558–alanine 572 traverse the membrane as a beta stranded segment. At tyrosine 573–lysine 584 the chain is on the periplasmic side. A beta stranded transmembrane segment spans residues isoleucine 585–valine 596. The Extracellular portion of the chain corresponds to tyrosine 597–threonine 601. A TonB C-terminal box motif is present at residues tyrosine 597 to phenylalanine 614. The chain crosses the membrane as a beta stranded span at residues alanine 602–phenylalanine 614.

This sequence belongs to the TonB-dependent receptor family. BtuB (TC 1.B.14.3.1) subfamily. As to quaternary structure, interacts with TonB. (Microbial infection) The hairpin motif of the receptor-binding domain of colicin E3 (ColE3) interacts with BtuB without displacing BtuB's central plug. An N-terminal fragment of E3 binds OmpF; trimeric complexes with ColE3, BtuB and OmpF can be cross-linked and immunoprecipitated.

It localises to the cell outer membrane. Its activity is regulated as follows. Calcium increases vitamin B12 binding affinity by a factor of 50-100. (Microbial infection) Colicins E1, E3 and K inhibit cyanocobalamin (CN-B12) uptake; E1 and E3 inhibit binding of CN-B12 to cells while colicin K inhibits a later, energy-dependent step of CN-B12. Its function is as follows. Involved in the active translocation of vitamin B12 (cyanocobalamin) across the outer membrane to the periplasmic space. It derives its energy for transport by interacting with the trans-periplasmic membrane protein TonB. (Microbial infection) Acts as a receptor for bacteriophages BF23 and C1, and for A and E colicins. Cyanocobalamin (CN-B12) in solid medium protects against colicins E1 and E3. Does not act as the translocon for colicin E3 (ColE3). The translocon is OmpF; trimeric complexes with ColE3, BtuB and OmpF can be cross-linked and immunoprecipitated. This chain is Vitamin B12 transporter BtuB, found in Escherichia coli (strain K12).